Here is a 315-residue protein sequence, read N- to C-terminus: Secreted mono- and diacylglycerol lipase LIP2 (315 aa).

The first 21 residues, 1 to 21 (MACFRVILYLSVIFFVQCVFA), serve as a signal peptide directing secretion. C68 and C308 are oxidised to a cystine. N74 is a glycosylation site (N-linked (GlcNAc...) asparagine). The active-site Nucleophile is the S182. Residue D240 is part of the active site. N265 carries N-linked (GlcNAc...) asparagine glycosylation. H292 is a catalytic residue.

It belongs to the AB hydrolase superfamily. Lipase family. Class 3 subfamily.

The protein localises to the secreted. The enzyme catalyses a monoacylglycerol + H2O = glycerol + a fatty acid + H(+). The catalysed reaction is a diacylglycerol + H2O = a monoacylglycerol + a fatty acid + H(+). Secreted lipase involved in Dandruff and seborrheic dermatitis (D/SD) probably via lipase-mediated breakdown of sebaceous lipids and release of irritating free fatty acids. Shows activity against monoglyceride and diglyceride substrates and generates free oleic acid from the substrates mono- and diolein. Able to cleave the oleic acid from both the 1 and the 2 position of the glycerol backbone as 1,2 isomers of diolein were converted into oleic acid and glycerol. Due to an absence of fatty acid synthase genes in Malassezia species, secretory lipases are essential for the yeast to generate free fatty acids from degradation of sebum and assimilate them as lipid sources for growth. Plays an essential role at the pathogen-host interface during disease progression. Also performs the reverse reaction to build diacylglycerols from monoacylglycerols. The chain is Secreted mono- and diacylglycerol lipase LIP2 from Malassezia restricta (strain ATCC 96810 / NBRC 103918 / CBS 7877) (Seborrheic dermatitis infection agent).